The following is a 285-amino-acid chain: Para-Rep C6 (285 aa).

Residues 3–99 (TRQSTSWVFT…VAGPWEYGLF (97 aa)) form the CRESS-DNA virus Rep endonuclease domain. The RCR-1 motif lies at 10–13 (VFTL). Positions 36 and 42 each coordinate a divalent metal cation. Positions 42 to 44 (HLQ) match the RCR-2 motif. The Nuclear localization signal signature appears at 52-74 (RNTTLRQAKYIFNGLNPHLEIAR). Y82 serves as the catalytic For DNA cleavage activity. The RCR-3 signature appears at 82–85 (YAMK). D87 is a binding site for a divalent metal cation. Residues 99 to 105 (FIKRGSH) carry the Nuclear localization signal motif. 175-183 (GPAGNEGKS) provides a ligand contact to ATP.

This sequence belongs to the nanoviridea/circoviridae replication-associated protein family. Homooligomer (Potential). Rep binds to repeated DNA motifs (iterons). It depends on Mg(2+) as a cofactor. Requires Mn(2+) as cofactor.

The protein localises to the host nucleus. It catalyses the reaction ATP + H2O = ADP + phosphate + H(+). In terms of biological role, initiates and terminates the replication only of its own subviral DNA molecule. The closed circular ssDNA genome is first converted to a superhelical dsDNA. Rep binds a specific hairpin at the genome origin of replication. Introduces an endonucleolytic nick within the intergenic region of the genome, thereby initiating the rolling circle replication (RCR). Following cleavage, binds covalently to the 5'-phosphate of DNA as a tyrosyl ester. The cleavage gives rise to a free 3'-OH that serves as a primer for the cellular DNA polymerase. The polymerase synthesizes the (+) strand DNA by rolling circle mechanism. After one round of replication, a Rep-catalyzed nucleotidyl transfer reaction releases a circular single-stranded virus genome, thereby terminating the replication. Displays origin-specific DNA cleavage, nucleotidyl transferase, ATPase and helicase activities. The polypeptide is Para-Rep C6 (C6) (Subterranean clover stunt C6 alphasatellite (SCSC6A)).